A 73-amino-acid polypeptide reads, in one-letter code: Translation initiation factor IF-1 (73 aa).

The S1-like domain maps to 1–72 (MAKEDAIEVE…NRGRITYRSK (72 aa)).

Belongs to the IF-1 family. Component of the 30S ribosomal translation pre-initiation complex which assembles on the 30S ribosome in the order IF-2 and IF-3, IF-1 and N-formylmethionyl-tRNA(fMet); mRNA recruitment can occur at any time during PIC assembly.

The protein resides in the cytoplasm. Its function is as follows. One of the essential components for the initiation of protein synthesis. Stabilizes the binding of IF-2 and IF-3 on the 30S subunit to which N-formylmethionyl-tRNA(fMet) subsequently binds. Helps modulate mRNA selection, yielding the 30S pre-initiation complex (PIC). Upon addition of the 50S ribosomal subunit IF-1, IF-2 and IF-3 are released leaving the mature 70S translation initiation complex. The protein is Translation initiation factor IF-1 of Syntrophobacter fumaroxidans (strain DSM 10017 / MPOB).